Consider the following 981-residue polypeptide: MVHHSGSIQSFKQQKGMNISKSEITKETSLKPSRRSLPCLAQSYAYSKSLSQSTSLFQSTESESQAPTSITLISTDKAEQVNTEENKNDSVLRCSFADLSDFCLALGKDKDYTDESEHATYDRSRLINDFVIKDKSEFKTKLSKNDMNYIASSGPLFKDGKKRIDYILVYRKTNIQYDKRNTFEKNLRAEGLMLEKEPAIASPDIMFIKIHIPWDTLCKYAERLNIRMPFRKKCYYTDGRSKSMGRMQTYFRRIKNWMAQNPMVLDKSAFPDLEESDCYTGPFSRARIHHFIINNKDTFFSNATRSRIVYHMLERTKYENGISKVGIRKLINNGSYIAAFPPHEGAYKSSQPIKTHGPQNNRHLLYERWARWGMWYKHQPLDLIRLYFGEKIGLYFAWLGWYTGMLIPAAIVGLCVFFYGLFTMNNSQVSQEICKATEVFMCPLCDKNCSLQRLNDSCIYAKVTYLFDNGGTVFFAIFMAIWATVFLEFWKRRRSILTYTWDLIEWEEEEETLRPQFEAKYYKMEIVNPITGKPEPHQPSSDKVTRLLVSVSGIFFMISLVITAVFGVVVYRLVVMEQFASFKWNFIKQYWQFATSAAAVCINFIIIMLLNLAYEKIAYLLTNLEYPRTESEWENSFALKMFLFQFVNLNSSIFYIAFFLGRFVGHPGKYNKLFDRWRLEECHPSGCLIDLCLQMGVIMFLKQIWNNFMELGYPLIQNWWSRHKIKRGIHDASIPQWENDWNLQPMNLHGLMDEYLEMVLQFGFTTIFVAAFPLAPLLALLNNIIEIRLDAYKFVTQWRRPLPARATDIGIWLGILEGIGILAVITNAFVIAITSDYIPRFVYEYKYGPCANHVEPSENCLKGYVNNSLSFFDLSELGMGKSGYCRYRDYRGPPWSSKPYEFTLQYWHILAARLAFIIVFEHLVFGIKSFIAYLIPDVPKGLHDRIRREKYLVQEMMYEAELEHLQQQRRKSGQPVHHEWP.

Residues 1–22 show a composition bias toward polar residues; it reads MVHHSGSIQSFKQQKGMNISKS. The segment at 1–33 is disordered; sequence MVHHSGSIQSFKQQKGMNISKSEITKETSLKPS. Residues 1 to 403 lie on the Cytoplasmic side of the membrane; that stretch reads MVHHSGSIQS…LYFAWLGWYT (403 aa). The chain crosses the membrane as a helical span at residues 404–424; the sequence is GMLIPAAIVGLCVFFYGLFTM. N-linked (GlcNAc...) asparagine glycosylation is found at asparagine 425, asparagine 448, and asparagine 455. Topologically, residues 425-469 are extracellular; it reads NNSQVSQEICKATEVFMCPLCDKNCSLQRLNDSCIYAKVTYLFDN. The chain crosses the membrane as a helical span at residues 470-490; the sequence is GGTVFFAIFMAIWATVFLEFW. Topologically, residues 491 to 550 are cytoplasmic; the sequence is KRRRSILTYTWDLIEWEEEEETLRPQFEAKYYKMEIVNPITGKPEPHQPSSDKVTRLLVS. The chain crosses the membrane as a helical span at residues 551 to 571; it reads VSGIFFMISLVITAVFGVVVY. Over 572 to 592 the chain is Extracellular; that stretch reads RLVVMEQFASFKWNFIKQYWQ. A helical transmembrane segment spans residues 593–613; that stretch reads FATSAAAVCINFIIIMLLNLA. Residues 614–640 are Cytoplasmic-facing; the sequence is YEKIAYLLTNLEYPRTESEWENSFALK. The chain crosses the membrane as a helical span at residues 641–661; sequence MFLFQFVNLNSSIFYIAFFLG. The Extracellular portion of the chain corresponds to 662–761; sequence RFVGHPGKYN…MDEYLEMVLQ (100 aa). The chain crosses the membrane as a helical span at residues 762-782; that stretch reads FGFTTIFVAAFPLAPLLALLN. Residues 783 to 810 are Cytoplasmic-facing; sequence NIIEIRLDAYKFVTQWRRPLPARATDIG. A helical transmembrane segment spans residues 811 to 831; that stretch reads IWLGILEGIGILAVITNAFVI. The Extracellular segment spans residues 832–914; sequence AITSDYIPRF…QYWHILAARL (83 aa). N-linked (GlcNAc...) asparagine glycosylation occurs at asparagine 866. The chain crosses the membrane as a helical span at residues 915 to 935; the sequence is AFIIVFEHLVFGIKSFIAYLI. The Cytoplasmic portion of the chain corresponds to 936–981; sequence PDVPKGLHDRIRREKYLVQEMMYEAELEHLQQQRRKSGQPVHHEWP.

The protein belongs to the anoctamin family. In terms of assembly, interacts with KCNT1/Slack. Highly expressed in the forebrain striatum.

The protein resides in the cell membrane. The enzyme catalyses a 1,2-diacyl-sn-glycero-3-phosphocholine(in) = a 1,2-diacyl-sn-glycero-3-phosphocholine(out). It carries out the reaction a beta-D-galactosyl-(1&lt;-&gt;1')-N-acylsphing-4-enine(out) = a beta-D-galactosyl-(1&lt;-&gt;1')-N-acylsphing-4-enine(in). Functionally, has calcium-dependent phospholipid scramblase activity; scrambles phosphatidylcholine and galactosylceramide. Seems to act as potassium channel regulator and may inhibit pain signaling; can facilitate KCNT1/Slack channel activity by promoting its full single-channel conductance at very low sodium concentrations and by increasing its sodium sensitivity. Does not exhibit calcium-activated chloride channel (CaCC) activity. This is Anoctamin-3 (ANO3) from Homo sapiens (Human).